The sequence spans 144 residues: Large ribosomal subunit protein uL14 (144 aa).

It belongs to the universal ribosomal protein uL14 family. As to quaternary structure, part of the 50S ribosomal subunit. Forms a cluster with proteins L3 and L24e, part of which may contact the 16S rRNA in 2 intersubunit bridges.

Binds to 23S rRNA. Forms part of two intersubunit bridges in the 70S ribosome. The protein is Large ribosomal subunit protein uL14 of Cenarchaeum symbiosum (strain A).